The sequence spans 255 residues: Hydroxyacylglutathione hydrolase (255 aa).

Residues H56, H58, D60, H61, H114, D133, and H171 each contribute to the Zn(2+) site.

This sequence belongs to the metallo-beta-lactamase superfamily. Glyoxalase II family. In terms of assembly, monomer. The cofactor is Zn(2+).

The enzyme catalyses an S-(2-hydroxyacyl)glutathione + H2O = a 2-hydroxy carboxylate + glutathione + H(+). It functions in the pathway secondary metabolite metabolism; methylglyoxal degradation; (R)-lactate from methylglyoxal: step 2/2. Its function is as follows. Thiolesterase that catalyzes the hydrolysis of S-D-lactoyl-glutathione to form glutathione and D-lactic acid. The chain is Hydroxyacylglutathione hydrolase from Bradyrhizobium sp. (strain BTAi1 / ATCC BAA-1182).